The sequence spans 673 residues: Putative lipase atg15 (673 aa).

Topologically, residues M1–R7 are cytoplasmic. The chain crosses the membrane as a helical; Signal-anchor for type II membrane protein span at residues F8–A28. Topologically, residues S29 to S673 are lumenal. N156, N191, N213, N271, and N295 each carry an N-linked (GlcNAc...) asparagine glycan. S311 acts as the Charge relay system in catalysis. An N-linked (GlcNAc...) asparagine glycan is attached at N457.

The protein belongs to the AB hydrolase superfamily. Lipase family. In terms of assembly, binds to both phosphatidylinositol (PI) and phosphatidylinositol 3,5-bisphosphate (PIP2).

The protein localises to the endosome. It localises to the multivesicular body membrane. It is found in the prevacuolar compartment membrane. It carries out the reaction a triacylglycerol + H2O = a diacylglycerol + a fatty acid + H(+). Its function is as follows. Lipase which is essential for lysis of subvacuolar cytoplasm to vacuole targeted bodies and intravacuolar autophagic bodies. Involved in the lysis of intravacuolar multivesicular body (MVB) vesicles. The intravacuolar membrane disintegration by atg15 is critical to life span extension. The polypeptide is Putative lipase atg15 (atg15) (Penicillium rubens (strain ATCC 28089 / DSM 1075 / NRRL 1951 / Wisconsin 54-1255) (Penicillium chrysogenum)).